We begin with the raw amino-acid sequence, 397 residues long: Cephalotocin receptor 1 (397 aa).

The Extracellular segment spans residues 1–48 (MRYITTHPNEISTQIWNNFSSTEIWSNFSAAKNETQPIRRNQDLANAE). Asn-18, Asn-27, and Asn-33 each carry an N-linked (GlcNAc...) asparagine glycan. Residues 49 to 69 (VITLAVVIIITVIGNSIVLIT) form a helical membrane-spanning segment. Over 70-91 (LFQRRKKLTRMHLFILHLSVTD) the chain is Cytoplasmic. Residues 92 to 112 (LFVAFFNNLPQMIWDITFLFL) traverse the membrane as a helical segment. At 113–120 (GTDLLCRL) the chain is on the extracellular side. A disulfide bridge connects residues Cys-118 and Cys-194. Residues 121–141 (VTYLQSVAMYASSYVLVATAI) traverse the membrane as a helical segment. Over 142-162 (DRYFAICHPLSSHKWTTARVH) the chain is Cytoplasmic. Residues 163–183 (VMVFIAWMLSFLFSTPQLFIW) form a helical membrane-spanning segment. Residues 184–205 (SMQFSNIGLTCQATFDPEWTLK) are Extracellular-facing. The helical transmembrane segment at 206-226 (FYITWLTVAIWILPTIALTLF) threads the bilayer. The Cytoplasmic segment spans residues 227 to 293 (YGMMCFAVWK…RGISRAKVRS (67 aa)). Residues 294–314 (VALTLSVVACCFICWSPFFVC) form a helical membrane-spanning segment. Over 315–331 (QMWAAWDENAPYSGAIY) the chain is Extracellular. The helical transmembrane segment at 332-352 (TILLLLSSLNSCTNPWIYMIF) threads the bilayer. At 353-397 (SVFQHRAKTSRFVNDEETTSVTVLSSRNDIRLMSMKKKLEQTARN) the chain is on the cytoplasmic side.

Belongs to the G-protein coupled receptor 1 family. Vasopressin/oxytocin receptor subfamily. In terms of tissue distribution, present in brain, buccal ganglion, gastric ganglion, olfactory lube, peduncle lobe, optical lobe, pancreas, the oviduct and the ovary.

It localises to the cell membrane. Its function is as follows. Acts as a receptor for cephalotocin. This is Cephalotocin receptor 1 from Octopus vulgaris (Common octopus).